Here is a 149-residue protein sequence, read N- to C-terminus: uncharacterized protein (149 aa).

This is an uncharacterized protein from Methanocaldococcus jannaschii (strain ATCC 43067 / DSM 2661 / JAL-1 / JCM 10045 / NBRC 100440) (Methanococcus jannaschii).